The chain runs to 1029 residues: Chitin synthase 3 (1029 aa).

A disordered region spans residues 1 to 29; sequence MAYYSRPASAGAARAQDDQDPYPYYPDPD. Asn-37 is a glycosylation site (N-linked (GlcNAc...) asparagine). A compositionally biased stretch (low complexity) spans 46–71; that stretch reads ASGAASSASHTSPFSDAHAASASPAS. Disordered stretches follow at residues 46–105 and 168–209; these read ASGA…SRMP and LAHR…AGTS. A compositionally biased stretch (polar residues) spans 76–91; it reads SHQQVSAHAPQQQHMS. Basic and acidic residues predominate over residues 191–202; the sequence is AHDEKYAYDRPD. Asn-401, Asn-514, Asn-527, and Asn-689 each carry an N-linked (GlcNAc...) asparagine glycan. Helical transmembrane passes span 723-743, 760-780, 796-816, 830-850, 860-880, 963-983, and 998-1018; these read FYSF…YIFF, IGVF…SSFI, AAVV…VLCL, AQMV…SLLA, FLQY…YAFC, VVLA…NGDA, and VYMV…FIGS.

It belongs to the chitin synthase family. Class I subfamily.

It localises to the cell membrane. The protein localises to the cytoplasmic vesicle membrane. It carries out the reaction [(1-&gt;4)-N-acetyl-beta-D-glucosaminyl](n) + UDP-N-acetyl-alpha-D-glucosamine = [(1-&gt;4)-N-acetyl-beta-D-glucosaminyl](n+1) + UDP + H(+). Functionally, polymerizes chitin, a structural polymer of the cell wall and septum, by transferring the sugar moiety of UDP-GlcNAc to the non-reducing end of the growing chitin polymer. This chain is Chitin synthase 3, found in Mycosarcoma maydis (Corn smut fungus).